A 393-amino-acid chain; its full sequence is Probable acetyl-CoA acetyltransferase (393 aa).

Cys-88 serves as the catalytic Acyl-thioester intermediate. Catalysis depends on proton acceptor residues His-349 and Cys-379.

Belongs to the thiolase-like superfamily. Thiolase family.

The enzyme catalyses 2 acetyl-CoA = acetoacetyl-CoA + CoA. This Mycobacterium leprae (strain TN) protein is Probable acetyl-CoA acetyltransferase (fadA4).